A 99-amino-acid polypeptide reads, in one-letter code: DNA-directed RNA polymerase subunit omega (99 aa).

Belongs to the RNA polymerase subunit omega family. As to quaternary structure, the RNAP catalytic core consists of 2 alpha, 1 beta, 1 beta' and 1 omega subunit. When a sigma factor is associated with the core the holoenzyme is formed, which can initiate transcription.

The enzyme catalyses RNA(n) + a ribonucleoside 5'-triphosphate = RNA(n+1) + diphosphate. In terms of biological role, promotes RNA polymerase assembly. Latches the N- and C-terminal regions of the beta' subunit thereby facilitating its interaction with the beta and alpha subunits. The polypeptide is DNA-directed RNA polymerase subunit omega (Deinococcus deserti (strain DSM 17065 / CIP 109153 / LMG 22923 / VCD115)).